The following is a 68-amino-acid chain: Sec-independent protein translocase protein TatA (68 aa).

Residues 1–21 (MGSFSIWHWLIVLVVVLLLFG) form a helical membrane-spanning segment. The segment at 46-68 (EEAASADKTIDGKTVEHKSDEVR) is disordered. Residues 53–68 (KTIDGKTVEHKSDEVR) show a composition bias toward basic and acidic residues.

The protein belongs to the TatA/E family. In terms of assembly, the Tat system comprises two distinct complexes: a TatABC complex, containing multiple copies of TatA, TatB and TatC subunits, and a separate TatA complex, containing only TatA subunits. Substrates initially bind to the TatABC complex, which probably triggers association of the separate TatA complex to form the active translocon.

Its subcellular location is the cell inner membrane. Part of the twin-arginine translocation (Tat) system that transports large folded proteins containing a characteristic twin-arginine motif in their signal peptide across membranes. TatA could form the protein-conducting channel of the Tat system. In Sinorhizobium fredii (strain NBRC 101917 / NGR234), this protein is Sec-independent protein translocase protein TatA.